A 282-amino-acid polypeptide reads, in one-letter code: V-set domain-containing T-cell activation inhibitor 1 (282 aa).

Residues 1 to 24 form the signal peptide; that stretch reads MASLGQIIFWSIINVIIILAGAIV. Ig-like V-type domains follow at residues 35–144 and 153–241; these read HFIT…ANLE and PEIN…IKVT. 2 cysteine pairs are disulfide-bonded: Cys56/Cys130 and Cys168/Cys225. An N-linked (GlcNAc...) asparagine glycan is attached at Asn216. Residue Gly257 is the site of GPI-anchor amidated glycine attachment. The propeptide at 258–282 is removed in mature form; sequence PSPCVSSVSAAGWALLSLSCCLMLR.

This sequence belongs to the immunoglobulin superfamily. BTN/MOG family. N-glycosylated.

Its subcellular location is the cell membrane. Negatively regulates T-cell-mediated immune response by inhibiting T-cell activation, proliferation, cytokine production and development of cytotoxicity. When expressed on the cell surface of tumor macrophages, plays an important role, together with regulatory T-cells (Treg), in the suppression of tumor-associated antigen-specific T-cell immunity. Involved in promoting epithelial cell transformation. The chain is V-set domain-containing T-cell activation inhibitor 1 from Rattus norvegicus (Rat).